The chain runs to 484 residues: UDP-N-acetylmuramoyl-L-alanyl-D-glutamate--2,6-diaminopimelate ligase (484 aa).

Ser29 is a binding site for UDP-N-acetyl-alpha-D-muramoyl-L-alanyl-D-glutamate. Residue Gly108–Ser114 coordinates ATP. UDP-N-acetyl-alpha-D-muramoyl-L-alanyl-D-glutamate-binding positions include Thr150–Thr151, Ser177, Gln183, and Arg185. N6-carboxylysine is present on Lys217. Meso-2,6-diaminopimelate is bound by residues Arg381, Asp405–Arg408, Gly453, and Glu457. A Meso-diaminopimelate recognition motif motif is present at residues Asp405–Arg408.

This sequence belongs to the MurCDEF family. MurE subfamily. Mg(2+) is required as a cofactor. Carboxylation is probably crucial for Mg(2+) binding and, consequently, for the gamma-phosphate positioning of ATP.

Its subcellular location is the cytoplasm. It carries out the reaction UDP-N-acetyl-alpha-D-muramoyl-L-alanyl-D-glutamate + meso-2,6-diaminopimelate + ATP = UDP-N-acetyl-alpha-D-muramoyl-L-alanyl-gamma-D-glutamyl-meso-2,6-diaminopimelate + ADP + phosphate + H(+). It functions in the pathway cell wall biogenesis; peptidoglycan biosynthesis. Catalyzes the addition of meso-diaminopimelic acid to the nucleotide precursor UDP-N-acetylmuramoyl-L-alanyl-D-glutamate (UMAG) in the biosynthesis of bacterial cell-wall peptidoglycan. This Mesorhizobium japonicum (strain LMG 29417 / CECT 9101 / MAFF 303099) (Mesorhizobium loti (strain MAFF 303099)) protein is UDP-N-acetylmuramoyl-L-alanyl-D-glutamate--2,6-diaminopimelate ligase.